The primary structure comprises 255 residues: Hydroxyacylglutathione hydrolase (255 aa).

Residues His56, His58, Asp60, His61, His114, Asp133, and His171 each contribute to the Zn(2+) site.

Belongs to the metallo-beta-lactamase superfamily. Glyoxalase II family. Monomer. The cofactor is Zn(2+).

The enzyme catalyses an S-(2-hydroxyacyl)glutathione + H2O = a 2-hydroxy carboxylate + glutathione + H(+). The protein operates within secondary metabolite metabolism; methylglyoxal degradation; (R)-lactate from methylglyoxal: step 2/2. In terms of biological role, thiolesterase that catalyzes the hydrolysis of S-D-lactoyl-glutathione to form glutathione and D-lactic acid. The chain is Hydroxyacylglutathione hydrolase from Cereibacter sphaeroides (strain ATCC 17023 / DSM 158 / JCM 6121 / CCUG 31486 / LMG 2827 / NBRC 12203 / NCIMB 8253 / ATH 2.4.1.) (Rhodobacter sphaeroides).